Consider the following 531-residue polypeptide: tRNA-2-methylthio-N(6)-dimethylallyladenosine synthase (531 aa).

The disordered stretch occupies residues 1–26 (MNEKQRLEQTGQIKTESHPADRKSAL). The segment covering 15-26 (TESHPADRKSAL) has biased composition (basic and acidic residues). The 119-residue stretch at 80–198 (RKFYIRTYGC…LPYILHEAYM (119 aa)) folds into the MTTase N-terminal domain. 6 residues coordinate [4Fe-4S] cluster: cysteine 89, cysteine 125, cysteine 159, cysteine 235, cysteine 239, and cysteine 242. The Radical SAM core domain occupies 221 to 451 (RKGKIKAWVN…NDLVQEIAAK (231 aa)). The TRAM domain occupies 454-517 (KQYEGQVVEV…TWTLTGELVN (64 aa)).

Belongs to the methylthiotransferase family. MiaB subfamily. In terms of assembly, monomer. It depends on [4Fe-4S] cluster as a cofactor.

It localises to the cytoplasm. It carries out the reaction N(6)-dimethylallyladenosine(37) in tRNA + (sulfur carrier)-SH + AH2 + 2 S-adenosyl-L-methionine = 2-methylsulfanyl-N(6)-dimethylallyladenosine(37) in tRNA + (sulfur carrier)-H + 5'-deoxyadenosine + L-methionine + A + S-adenosyl-L-homocysteine + 2 H(+). In terms of biological role, catalyzes the methylthiolation of N6-(dimethylallyl)adenosine (i(6)A), leading to the formation of 2-methylthio-N6-(dimethylallyl)adenosine (ms(2)i(6)A) at position 37 in tRNAs that read codons beginning with uridine. The chain is tRNA-2-methylthio-N(6)-dimethylallyladenosine synthase from Geobacillus kaustophilus (strain HTA426).